The following is a 347-amino-acid chain: NADH-ubiquinone oxidoreductase chain 2 (347 aa).

The next 10 membrane-spanning stretches (helical) occupy residues 13 to 33 (VILGTLIVMMSSHWLLIWIGF), 59 to 79 (YFFTQATASMLLMLAVLLNLM), 96 to 116 (MIMTMALTMKLGLAPFHFWVP), 122 to 142 (IPLSSGLILLTWQKLAPLTVL), 149 to 169 (INLTMLLTMSIASIAIGGWGG), 178 to 198 (IMAYSSIAHMGWMTTILIYNP), 200 to 220 (MTLLNLVIYILMTTTMFMLFM), 240 to 260 (IVTITLATLLSLGGLPPLTGF), 276 to 296 (IILPTIMAITALLNLFFYMRL), and 325 to 345 (LLTPMIVLSTLTLPPTPMIII).

This sequence belongs to the complex I subunit 2 family. Core subunit of respiratory chain NADH dehydrogenase (Complex I) which is composed of 45 different subunits. Interacts with TMEM242.

The protein resides in the mitochondrion inner membrane. It carries out the reaction a ubiquinone + NADH + 5 H(+)(in) = a ubiquinol + NAD(+) + 4 H(+)(out). Core subunit of the mitochondrial membrane respiratory chain NADH dehydrogenase (Complex I) which catalyzes electron transfer from NADH through the respiratory chain, using ubiquinone as an electron acceptor. Essential for the catalytic activity and assembly of complex I. The sequence is that of NADH-ubiquinone oxidoreductase chain 2 from Molossus ater (Black mastiff bat).